Here is a 452-residue protein sequence, read N- to C-terminus: Scaffold protein ILK (452 aa).

Met-1 is subject to N-acetylmethionine. 5 ANK repeats span residues Asp-2–Gly-30, Asp-31–Met-63, Asn-64–Val-96, Asn-97–Cys-129, and Asn-130–Arg-174. Residues His-33–Lys-139 form an interaction with LIMS1 region. Position 173 is a phosphothreonine (Thr-173). Residues Gly-180 to Trp-212 are PH-like; mediates interaction with TGFB1I1. Ser-186 carries the post-translational modification Phosphoserine. Residues Leu-193–Leu-446 form the Protein kinase domain. Residues Asn-200, Asn-202, His-203, and Ser-204 each contribute to the ATP site. The residue at position 246 (Ser-246) is a Phosphoserine. ATP-binding residues include His-270, Met-272, and Asn-279. Residue Asp-339 participates in Mg(2+) binding. Residue Lys-341 participates in ATP binding. The short motif at Lys-363–Arg-371 is the Nuclear localization signal element. Lys-426 bears the N6-acetyllysine mark.

It belongs to the protein kinase superfamily. TKL Ser/Thr protein kinase family. Component of the heterotrimeric IPP (ILK-PINCH-PARVIN) complex composed of ILK, LIMS1/PINCH and PARVA; the complex binds to F-actin via the C-terminal tail of LIMS1 and the N-terminal region of PARVA, promoting F-actin filament bundling. Formation of the IPP complex is dependent on protein kinase C and precedes integrin-mediated cell adhesion and spreading. ILK also interacts with LIMS2/PINCH2 and with PARVB and PARVG which may substitute for LIMS1 and PARVA in the IPP complex; PARVA and PARVB compete for the same binding site. Interaction with PARVG promotes the establishment of cell polarity required for leukocyte migration. Interacts with the cytoplasmic domain of integrin ITGB1 and may also interact with integrins ITGB2, ITGB3 and/or ITGB5. Interacts probably also with TGFB1I1. Interacts (via ANK repeats) with EPHA1 (via SAM domain); stimulated by EFNA1 but independent of the kinase activity of EPHA1. Interacts with FERMT2. Interacts with LIMD2; leading to activate the protein kinase activity. Interacts with PXN/PAXILLIN (via LD motif 4). Interacts with CCDC25 (via cytoplasmic region); initiating the ILK-PARVB cascade to induce cytoskeleton rearrangement and directional migration of cells. Interacts with IQGAP1; the interaction is required for localization of IQGAP1 to the cell cortex. Post-translationally, phosphorylation by PAK1 modulates ILK subcellular location by promoting its nuclear export. Highly expressed in lung, heart, kidney, liver, brain, spleen and skeletal muscle. Weakly expressed in testis.

The protein resides in the cell junction. The protein localises to the focal adhesion. It is found in the cell membrane. It localises to the cytoplasm. Its subcellular location is the myofibril. The protein resides in the sarcomere. The protein localises to the cell projection. It is found in the lamellipodium. It localises to the nucleus. Its subcellular location is the cytoskeleton. The protein resides in the microtubule organizing center. The protein localises to the centrosome. It is found in the cell cortex. In terms of biological role, scaffold protein which mediates protein-protein interactions during a range of cellular events including focal adhesion assembly, cell adhesion and cell migration. Regulates integrin-mediated signal transduction by contributing to inside-out integrin activation. Recruits PARVA and LIMS1/PITCH to form the heterotrimeric IPP (ILK-PINCH-PARVIN) complex which binds to F-actin via the C-terminal tail of LIMS1 and the N-terminal region of PARVA, promoting F-actin filament bundling, a process required to generate force for actin cytoskeleton reorganization and subsequent dynamic cell adhesion events such as cell spreading and migration. Binding to PARVA promotes effective assembly of ILK into focal adhesions while PARVA-bound ILK can simultaneously engage integrin-beta cytoplasmic tails to mediate cell adhesion. Plays a role with PARVG in promoting the cell adhesion and spreading of leukocytes. Acts as an upstream effector of both AKT1/PKB and GSK3. Mediates trafficking of caveolae to the cell surface in an ITGB1-dependent manner by promoting the recruitment of IQGAP1 to the cell cortex which cooperates with its effector DIAPH1 to locally stabilize microtubules and allow stable insertion of caveolae into the plasma membrane. Required for the maintenance of mitotic spindle integrity by promoting phosphorylation of TACC3 by AURKA. Associates with chromatin and may act as a negative regulator of transcription when located in the nucleus. The polypeptide is Scaffold protein ILK (Mus musculus (Mouse)).